Reading from the N-terminus, the 273-residue chain is Glutamate racemase (273 aa).

Substrate contacts are provided by residues 19–20 and 51–52; these read DS and YG. Cys83 functions as the Proton donor/acceptor in the catalytic mechanism. 84–85 lines the substrate pocket; the sequence is NT. Catalysis depends on Cys198, which acts as the Proton donor/acceptor. 199-200 contacts substrate; the sequence is TH.

It belongs to the aspartate/glutamate racemases family.

The enzyme catalyses L-glutamate = D-glutamate. It functions in the pathway cell wall biogenesis; peptidoglycan biosynthesis. In terms of biological role, provides the (R)-glutamate required for cell wall biosynthesis. This Agrobacterium fabrum (strain C58 / ATCC 33970) (Agrobacterium tumefaciens (strain C58)) protein is Glutamate racemase.